A 160-amino-acid polypeptide reads, in one-letter code: Ribosomal RNA large subunit methyltransferase H (160 aa).

S-adenosyl-L-methionine contacts are provided by residues Leu76, Gly108, and 127-132 (FGFMTW).

The protein belongs to the RNA methyltransferase RlmH family. In terms of assembly, homodimer.

It is found in the cytoplasm. The catalysed reaction is pseudouridine(1915) in 23S rRNA + S-adenosyl-L-methionine = N(3)-methylpseudouridine(1915) in 23S rRNA + S-adenosyl-L-homocysteine + H(+). In terms of biological role, specifically methylates the pseudouridine at position 1915 (m3Psi1915) in 23S rRNA. The chain is Ribosomal RNA large subunit methyltransferase H from Bartonella henselae (strain ATCC 49882 / DSM 28221 / CCUG 30454 / Houston 1) (Rochalimaea henselae).